An 88-amino-acid polypeptide reads, in one-letter code: Small ribosomal subunit protein uS17 (88 aa).

The protein belongs to the universal ribosomal protein uS17 family. As to quaternary structure, part of the 30S ribosomal subunit.

Functionally, one of the primary rRNA binding proteins, it binds specifically to the 5'-end of 16S ribosomal RNA. The polypeptide is Small ribosomal subunit protein uS17 (Mycoplasmopsis agalactiae (strain NCTC 10123 / CIP 59.7 / PG2) (Mycoplasma agalactiae)).